We begin with the raw amino-acid sequence, 391 residues long: Glycosyltransferase afumC (391 aa).

Belongs to the afumC glycosyltransferase family.

It functions in the pathway secondary metabolite biosynthesis. Its activity is regulated as follows. Activity is significantly decreased by addition of divalent cations such as Mg(2+), Mn(2+), Zn(2+), Ca(2+), Co(2+), Cu(2+), and Ni(2+); while Fe(2+) has little effect. Its function is as follows. Glycosyltransferase; part of the gene cluster that mediates the biosynthesis fumihopaside A, a hopane-type glucoside that enhances the thermotolerance and UV resistance of N.fumigata. The first step of fumihopaside A biosynthesis is performed by the squalene hopane cyclase afumA that catalyzes the cyclization of 3S-oxidosqualene into the hopene 21-beta-H-hopane-3-beta,22-diol. The cytochrome P450 monooxygenase afumB is responsible for both hydroxylation at C-24 and oxidations at C-30 of the afumA product. The glycosyltransferase afumC then catalyzes the glycosylation at C-24, using UDP-D-glucose as a donor, to produce fumihopaside A. AfumC is also able to accept UDP-D-galactose and UDP-D-glucuronic acid as donors to yield minor derivatives. Fumihopaside B, another minor derivative produced, is different from fumihopaside A due to the presence of a double bond between C-22 and C-29. The sequence is that of Glycosyltransferase afumC from Aspergillus fumigatus (strain CBS 144.89 / FGSC A1163 / CEA10) (Neosartorya fumigata).